The following is a 135-amino-acid chain: Large ribosomal subunit protein bL17 (135 aa).

The protein belongs to the bacterial ribosomal protein bL17 family. As to quaternary structure, part of the 50S ribosomal subunit. Contacts protein L32.

The sequence is that of Large ribosomal subunit protein bL17 from Listeria welshimeri serovar 6b (strain ATCC 35897 / DSM 20650 / CCUG 15529 / CIP 8149 / NCTC 11857 / SLCC 5334 / V8).